The primary structure comprises 250 residues: Small ribosomal subunit protein uS2 (250 aa).

The protein belongs to the universal ribosomal protein uS2 family.

In Polaromonas sp. (strain JS666 / ATCC BAA-500), this protein is Small ribosomal subunit protein uS2.